A 239-amino-acid chain; its full sequence is Lectin (239 aa).

2 N-linked (GlcNAc...) asparagine glycosylation sites follow: Asn17 and Asn113.

Belongs to the leguminous lectin family. Homodimer.

In terms of biological role, galactose and N-acetyllactosamine specific lectin. The sequence is that of Lectin from Erythrina crista-galli (Cockspur coral tree).